The chain runs to 860 residues: Receptor-like protein 31 (860 aa).

Residues 1-23 (MMIPSQSCFCFFFMVSFFLHTLA) form the signal peptide. The Extracellular portion of the chain corresponds to 24–809 (SPTLRHCRHD…SEPEEHVINW (786 aa)). Asn-49, Asn-64, Asn-88, Asn-95, Asn-112, Asn-117, Asn-154, Asn-178, Asn-202, and Asn-213 each carry an N-linked (GlcNAc...) asparagine glycan. LRR repeat units lie at residues 108–131 (QHLHNLTLSNCSLYGDIPSSLGNL), 132–155 (FRLTLLDLSYNYLVGQVPPSIGNL), 156–179 (SRLTILDLWDNKLVGQLPASIGNL), 181–202 (QLEYLIFSHNKFSGNIPVTFSN), 203–226 (LTKLLVVNLYNNSFESMLPLDMSG), and 227–251 (FQNLDYFNVGENSFSGTLPKSLFTI). An LRR 7; degenerate repeat occupies 252-276 (PSLRWANLEGNMFKGPIEFRNMYSP). LRR repeat units follow at residues 277-301 (STRLQYLFLSQNKFDGPIPDTLSQY), 302-325 (LNLIELDLSFNNLTGSFPTFLFTI), 326-349 (PTLERVNLEGNHLKGPVEFGNMSS), 350-374 (SSSLKFLNFAQNEFNGSIPESVSQY), 376-398 (NLEELHLSFNNFIGTIPRSISKL), 400-419 (KLEYFCLEDNNMVGEVPSWL), 420-444 (WRLTMVALSNNSFNSFGESSEGLDE), 446-468 (QVQWLDLSSNSFQGPFPHWICKL), 469-494 (RSLEILIMSDNRFNGSIPPCLSSFMV), 496-517 (LTDLILRNNSLSGPLPDIFVNA), 518-541 (TKLLSLDVSRNKLDGVLPKSLIHC), 543-564 (AMQLLNVRSNKIKDKFPSWLGS), 565-591 (LPSLHVLILRSNEFYGTLYQPHASIGF), and 592-615 (QSLRVIDVSHNDLIGTLPSFYFSS). Asn-313, Asn-346, and Asn-364 each carry an N-linked (GlcNAc...) asparagine glycan. Asn-429 carries N-linked (GlcNAc...) asparagine glycosylation. N-linked (GlcNAc...) asparagine glycosylation is found at Asn-482, Asn-503, and Asn-516. Residues Asn-642, Asn-673, and Asn-697 are each glycosylated (N-linked (GlcNAc...) asparagine). 4 LRR repeats span residues 665–690 (INEENKVINFSGNRFSGNIPESIGLL), 691–714 (KELRHLNLSSNAFTGNIPQSLANL), 716–738 (KLEALDLSLNQLSGQIPQGLGSL), and 740–763 (FMSTMNFSYNFLEGPVPKSTQFQG). Residues Asn-745 and Asn-765 are each glycosylated (N-linked (GlcNAc...) asparagine). The chain crosses the membrane as a helical span at residues 810–830 (IAAGIAYGPGVVCGLVIGHIF). The Cytoplasmic segment spans residues 831–860 (LSHKHECWFMEKFRRKKPKVVTRIARPSKH).

It belongs to the RLP family.

It localises to the cell membrane. This is Receptor-like protein 31 from Arabidopsis thaliana (Mouse-ear cress).